Reading from the N-terminus, the 308-residue chain is L-lactate dehydrogenase 2 (308 aa).

NAD(+) is bound by residues valine 13, aspartate 34, arginine 39, tyrosine 64, and 78–79 (GV). Arginine 87 provides a ligand contact to substrate. Threonine 100 is a binding site for NAD(+). 119-122 (NPVD) is a binding site for substrate. Threonine 142 lines the NAD(+) pocket. 147–150 (DSMR) provides a ligand contact to substrate. The active-site Proton acceptor is histidine 174. A substrate-binding site is contributed by threonine 224.

The protein belongs to the LDH/MDH superfamily. LDH family. Homotetramer.

It is found in the cytoplasm. It catalyses the reaction (S)-lactate + NAD(+) = pyruvate + NADH + H(+). Its pathway is fermentation; pyruvate fermentation to lactate; (S)-lactate from pyruvate: step 1/1. Catalyzes the conversion of lactate to pyruvate. The sequence is that of L-lactate dehydrogenase 2 from Lactobacillus acidophilus (strain ATCC 700396 / NCK56 / N2 / NCFM).